The following is a 51-amino-acid chain: Large ribosomal subunit protein eL39 (51 aa).

This sequence belongs to the eukaryotic ribosomal protein eL39 family.

The sequence is that of Large ribosomal subunit protein eL39 from Methanococcoides burtonii (strain DSM 6242 / NBRC 107633 / OCM 468 / ACE-M).